Here is a 198-residue protein sequence, read N- to C-terminus: Protein FAM219B (198 aa).

Disordered stretches follow at residues 1–58 (MATA…KRGP) and 83–146 (RRKG…EQVN). Phosphoserine is present on residues Ser14, Ser91, Ser125, and Ser127. Over residues 134-146 (RYSSGYSSAEQVN) the composition is skewed to polar residues.

The protein belongs to the FAM219 family.

The protein is Protein FAM219B (FAM219B) of Homo sapiens (Human).